Reading from the N-terminus, the 302-residue chain is 4-hydroxy-tetrahydrodipicolinate synthase (302 aa).

T55 is a pyruvate binding site. Y144 acts as the Proton donor/acceptor in catalysis. K172 (schiff-base intermediate with substrate) is an active-site residue. V214 lines the pyruvate pocket.

Belongs to the DapA family. In terms of assembly, homotetramer; dimer of dimers.

Its subcellular location is the cytoplasm. It catalyses the reaction L-aspartate 4-semialdehyde + pyruvate = (2S,4S)-4-hydroxy-2,3,4,5-tetrahydrodipicolinate + H2O + H(+). It participates in amino-acid biosynthesis; L-lysine biosynthesis via DAP pathway; (S)-tetrahydrodipicolinate from L-aspartate: step 3/4. In terms of biological role, catalyzes the condensation of (S)-aspartate-beta-semialdehyde [(S)-ASA] and pyruvate to 4-hydroxy-tetrahydrodipicolinate (HTPA). The protein is 4-hydroxy-tetrahydrodipicolinate synthase of Prochlorococcus marinus (strain MIT 9303).